A 200-amino-acid polypeptide reads, in one-letter code: dITP/XTP pyrophosphatase (200 aa).

Ser-16–Lys-21 is a binding site for substrate. Mg(2+) contacts are provided by Glu-46 and Asp-75. Catalysis depends on Asp-75, which acts as the Proton acceptor. Residues Ser-76, Phe-154 to Asp-157, Lys-177, and His-182 to Arg-183 each bind substrate.

Belongs to the HAM1 NTPase family. Homodimer. Mg(2+) is required as a cofactor.

It catalyses the reaction XTP + H2O = XMP + diphosphate + H(+). It carries out the reaction dITP + H2O = dIMP + diphosphate + H(+). The catalysed reaction is ITP + H2O = IMP + diphosphate + H(+). In terms of biological role, pyrophosphatase that catalyzes the hydrolysis of nucleoside triphosphates to their monophosphate derivatives, with a high preference for the non-canonical purine nucleotides XTP (xanthosine triphosphate), dITP (deoxyinosine triphosphate) and ITP. Seems to function as a house-cleaning enzyme that removes non-canonical purine nucleotides from the nucleotide pool, thus preventing their incorporation into DNA/RNA and avoiding chromosomal lesions. The sequence is that of dITP/XTP pyrophosphatase from Prochlorococcus marinus (strain SARG / CCMP1375 / SS120).